A 34-amino-acid chain; its full sequence is Photosystem II reaction center protein M (34 aa).

A helical transmembrane segment spans residues 5-25; it reads ILALIAIALFISVPTAFLIII.

This sequence belongs to the PsbM family. PSII is composed of 1 copy each of membrane proteins PsbA, PsbB, PsbC, PsbD, PsbE, PsbF, PsbH, PsbI, PsbJ, PsbK, PsbL, PsbM, PsbT, PsbX, PsbY, PsbZ, Psb30/Ycf12, at least 3 peripheral proteins of the oxygen-evolving complex and a large number of cofactors. It forms dimeric complexes.

The protein localises to the plastid. It localises to the chloroplast thylakoid membrane. One of the components of the core complex of photosystem II (PSII). PSII is a light-driven water:plastoquinone oxidoreductase that uses light energy to abstract electrons from H(2)O, generating O(2) and a proton gradient subsequently used for ATP formation. It consists of a core antenna complex that captures photons, and an electron transfer chain that converts photonic excitation into a charge separation. This subunit is found at the monomer-monomer interface. This Gnetum parvifolium (Small-leaved jointfir) protein is Photosystem II reaction center protein M.